Reading from the N-terminus, the 366-residue chain is Phenylalanine--tRNA ligase alpha subunit (366 aa).

Mg(2+) is bound at residue Glu264.

The protein belongs to the class-II aminoacyl-tRNA synthetase family. Phe-tRNA synthetase alpha subunit type 1 subfamily. Tetramer of two alpha and two beta subunits. It depends on Mg(2+) as a cofactor.

It is found in the cytoplasm. It carries out the reaction tRNA(Phe) + L-phenylalanine + ATP = L-phenylalanyl-tRNA(Phe) + AMP + diphosphate + H(+). The protein is Phenylalanine--tRNA ligase alpha subunit of Zymomonas mobilis subsp. mobilis (strain ATCC 31821 / ZM4 / CP4).